A 427-amino-acid polypeptide reads, in one-letter code: Serine hydroxymethyltransferase (427 aa).

Residues Leu118 and 122–124 (GHL) each bind (6S)-5,6,7,8-tetrahydrofolate. An N6-(pyridoxal phosphate)lysine modification is found at Lys227. (6S)-5,6,7,8-tetrahydrofolate is bound by residues Glu243 and 351 to 353 (SPF).

It belongs to the SHMT family. In terms of assembly, homodimer. It depends on pyridoxal 5'-phosphate as a cofactor.

It localises to the cytoplasm. The catalysed reaction is (6R)-5,10-methylene-5,6,7,8-tetrahydrofolate + glycine + H2O = (6S)-5,6,7,8-tetrahydrofolate + L-serine. It functions in the pathway one-carbon metabolism; tetrahydrofolate interconversion. Its pathway is amino-acid biosynthesis; glycine biosynthesis; glycine from L-serine: step 1/1. Catalyzes the reversible interconversion of serine and glycine with tetrahydrofolate (THF) serving as the one-carbon carrier. This reaction serves as the major source of one-carbon groups required for the biosynthesis of purines, thymidylate, methionine, and other important biomolecules. Also exhibits THF-independent aldolase activity toward beta-hydroxyamino acids, producing glycine and aldehydes, via a retro-aldol mechanism. The protein is Serine hydroxymethyltransferase of Thermotoga maritima (strain ATCC 43589 / DSM 3109 / JCM 10099 / NBRC 100826 / MSB8).